The chain runs to 239 residues: Pyridoxine 5'-phosphate synthase (239 aa).

A 3-amino-2-oxopropyl phosphate-binding site is contributed by N7. 9-10 contributes to the 1-deoxy-D-xylulose 5-phosphate binding site; sequence DH. R18 contacts 3-amino-2-oxopropyl phosphate. H43 functions as the Proton acceptor in the catalytic mechanism. The 1-deoxy-D-xylulose 5-phosphate site is built by R45 and H50. The active-site Proton acceptor is E70. Residue T100 coordinates 1-deoxy-D-xylulose 5-phosphate. H192 (proton donor) is an active-site residue. 3-amino-2-oxopropyl phosphate is bound by residues G193 and 214–215; that span reads GH.

This sequence belongs to the PNP synthase family. Homooctamer; tetramer of dimers.

The protein resides in the cytoplasm. The enzyme catalyses 3-amino-2-oxopropyl phosphate + 1-deoxy-D-xylulose 5-phosphate = pyridoxine 5'-phosphate + phosphate + 2 H2O + H(+). It participates in cofactor biosynthesis; pyridoxine 5'-phosphate biosynthesis; pyridoxine 5'-phosphate from D-erythrose 4-phosphate: step 5/5. Functionally, catalyzes the complicated ring closure reaction between the two acyclic compounds 1-deoxy-D-xylulose-5-phosphate (DXP) and 3-amino-2-oxopropyl phosphate (1-amino-acetone-3-phosphate or AAP) to form pyridoxine 5'-phosphate (PNP) and inorganic phosphate. In Pelagibacter ubique (strain HTCC1062), this protein is Pyridoxine 5'-phosphate synthase.